A 428-amino-acid chain; its full sequence is Putative zinc metalloprotease SACOL1281 (428 aa).

Histidine 21 contributes to the Zn(2+) binding site. Glutamate 22 is an active-site residue. Histidine 25 is a Zn(2+) binding site. 4 helical membrane passes run 172–194, 309–331, 352–374, and 401–420; these read FLTL…IGLA, GSTY…GFSF, IISL…LIPI, and TTII…LVTW. The PDZ domain occupies 186–269; it reads ALVLFIGLAY…TKSVELTPKK (84 aa).

Belongs to the peptidase M50B family. The cofactor is Zn(2+).

It is found in the cell membrane. This Staphylococcus aureus (strain COL) protein is Putative zinc metalloprotease SACOL1281.